Here is a 145-residue protein sequence, read N- to C-terminus: Hemoglobin subunit beta-2 (145 aa).

Positions 2–145 constitute a Globin domain; the sequence is HLTDQEIKYI…VADAVGKGYH (144 aa). 2 residues coordinate heme b: His-63 and His-91.

This sequence belongs to the globin family. As to expression, red blood cells.

The polypeptide is Hemoglobin subunit beta-2 (Telmatobius peruvianus (Andean frog)).